A 142-amino-acid polypeptide reads, in one-letter code: Large ribosomal subunit protein uL13 (142 aa).

The protein belongs to the universal ribosomal protein uL13 family. Part of the 50S ribosomal subunit.

Its function is as follows. This protein is one of the early assembly proteins of the 50S ribosomal subunit, although it is not seen to bind rRNA by itself. It is important during the early stages of 50S assembly. This Thioalkalivibrio sulfidiphilus (strain HL-EbGR7) protein is Large ribosomal subunit protein uL13.